The chain runs to 638 residues: Bifunctional protein glk (638 aa).

The disordered stretch occupies residues 1-20 (MSTGVQTKAAPGAGQHADGP). Residues 1–341 (MSTGVQTKAA…QLSNRAGGSS (341 aa)) are glucokinase. 24–29 (ADIGGT) lines the ATP pocket. Residues 342 to 418 (SAVFERIRQM…LKLATGLTGT (77 aa)) form the HTH rpiR-type domain. Positions 342–638 (SAVFERIRQM…SHGAASSARD (297 aa)) are putative HTH-type transcriptional regulator. Positions 378–397 (IVDIARKADVSQPTVIRFCR) form a DNA-binding region, H-T-H motif. Residues 462 to 601 (AIDLLNGARR…AVGVAIRRAV (140 aa)) form the SIS domain.

This sequence in the N-terminal section; belongs to the bacterial glucokinase family.

The protein resides in the cytoplasm. The catalysed reaction is D-glucose + ATP = D-glucose 6-phosphate + ADP + H(+). The protein is Bifunctional protein glk (glk) of Paraburkholderia xenovorans (strain LB400).